Reading from the N-terminus, the 215-residue chain is Cytochrome b6 (215 aa).

The helical transmembrane segment at 32-52 (IFYCLGGITLTCFLIQVATGF) threads the bilayer. Heme c is bound at residue C35. The heme b site is built by H86 and H100. 3 helical membrane-spanning segments follow: residues 90–110 (ASMMVLMMILHVFRVYLTGGF), 116–136 (LTWVTGVILAVLTVSFGVTGY), and 186–206 (LHTFVLPLLTAVFMLMHFLMI). H187 and H202 together coordinate heme b.

Belongs to the cytochrome b family. PetB subfamily. In terms of assembly, the 4 large subunits of the cytochrome b6-f complex are cytochrome b6, subunit IV (17 kDa polypeptide, PetD), cytochrome f and the Rieske protein, while the 4 small subunits are PetG, PetL, PetM and PetN. The complex functions as a dimer. The cofactor is heme b. It depends on heme c as a cofactor.

The protein resides in the plastid. Its subcellular location is the chloroplast thylakoid membrane. Functionally, component of the cytochrome b6-f complex, which mediates electron transfer between photosystem II (PSII) and photosystem I (PSI), cyclic electron flow around PSI, and state transitions. This is Cytochrome b6 from Spirogyra maxima (Green alga).